A 320-amino-acid polypeptide reads, in one-letter code: Methionyl-tRNA formyltransferase (320 aa).

111-114 (SLLP) serves as a coordination point for (6S)-5,6,7,8-tetrahydrofolate.

It belongs to the Fmt family.

The enzyme catalyses L-methionyl-tRNA(fMet) + (6R)-10-formyltetrahydrofolate = N-formyl-L-methionyl-tRNA(fMet) + (6S)-5,6,7,8-tetrahydrofolate + H(+). Functionally, attaches a formyl group to the free amino group of methionyl-tRNA(fMet). The formyl group appears to play a dual role in the initiator identity of N-formylmethionyl-tRNA by promoting its recognition by IF2 and preventing the misappropriation of this tRNA by the elongation apparatus. In Bifidobacterium adolescentis (strain ATCC 15703 / DSM 20083 / NCTC 11814 / E194a), this protein is Methionyl-tRNA formyltransferase.